Consider the following 1407-residue polypeptide: MNTSQATRAALFLNGSNRQAMLLQRSSMSQLWGSVRMRTSRLSLNRTKAVSLRCSAQPNKPKAAVSTGSFVTADELPSLVEKPAAEVIHFYRVPLIQESANAELLKAVQTKISNQIVSLTTEQSFNIGLESKLKDEKLSVLKWILQETYEPENLGTDSFLERKKQEGLHAVIVEVGPRLSFTTAWSTNAVSICRACGLDEVTRLERSRRYLLFSKEPLLENQIKEFAAMVHDRMTECVYTQKLVSFETNVVPEEVKYVPVMEKGRKALEEINQEMGLAFDEQDLQYYTRLFREDIKRDPTNVELFDIAQSNSEHSRHWFFAGNMVIDGKPMDKSLMQIVKSTWEANRNNSVIGFKDNSSAIRGFLVNQLRPLLPGSVCLLDVSARDLDILFTAETHNFPCAVAPYPGAETGAGGRIRDTHATGRGSFVVASTSGYCVGNLNMEGSYAPWEDSSFQYPSNLASPLQILIDASNGASDYGNKFGEPMIQGYTRTFGMRLPSGDRREWLKPIMFSAGIGQIDHTHITKGEPEVGMLVVKIGGPAYRIGMGGGAASSMVSGQNDAELDFNAVQRGDAEMSQKLYRVVRACIEMGEKNPIISIHDQGAGGNCNVVKEIIYPQGAEIDIRAVVVGDHTMSVLEIWGAEYQEQDAILVKAESREILQSICKRERLSMAVIGTINGGGRCTLIDSTAAAKCSKEGLPPPPPAVDLELEKVLGDMPKKTFKFNRIAYAREPLDIAPGITLMDALKRVLRLPSVSSKRFLTTKVDRCVTGLVAQQQTVGPLQITLADVAVIAQTFTDLTGGACAIGEQPIKGLLDPKAMARLAVGEALTNLVWAKVTALSDVKASGNWMYAAKLEGEGSAMYDAAIALSEAMIELGIAIDGGKDSLSMAAHADGEVVKAPGNLVISAYVTCPDITKTVTPDLKLGGDDGILLHVDLAKGKRRLGGSALAQVFGQIGNDCPDLDDVPYLKNVFDGVQALIAENLVSAGHDISDGGLVVTALEMAFAGNKGINLDLASNGISLFETLFSEELGLVLEISKTNLDAVMEKLRAFDVTAEIIGNVTDSPLIEVKVDGITHLSEKTSFLRDMWEDTSFQLEKLQRLASCVEMEKEGLKFRHEPNWKLSFIPSSTNNNYMSQDVKPKVAVIREEGSNGDREMSAAFYAAGFEPWDVTVSDLLAGDITLDQFRGIVFVGGFSYADVLDSAKGWAASIRFNEPVLSQFQEFYKRPDTFSLGICNGCQLMALLGWVPGPQVGGSLDTSQPRFVHNESGRFECRFTSVTIKDSPSIMLKGMEGSTLGVWAAHGEGRAYFPDEGVLDHMLHSDLAPLRYCDDDGNVTEAYPFNLNGSPLGIAAICSPDGRHLAMMPHPERCFLMWQFPWYPTSWDVEKAGPSPWLKMFQNARDWLESC.

The N-terminal 53 residues, 1–53 (MNTSQATRAALFLNGSNRQAMLLQRSSMSQLWGSVRMRTSRLSLNRTKAVSLR), are a transit peptide targeting the chloroplast and mitochondrion. ATP-binding positions include 407 to 418 (GAETGAGGRIRD), 487 to 489 (QGY), and Ala-786. The Mg(2+) site is built by Asp-787, Glu-826, Asn-830, and Asp-989. An ATP-binding site is contributed by Ser-991. Residues 1141–1381 (KVAVIREEGS…LMWQFPWYPT (241 aa)) form the Glutamine amidotransferase type-1 domain. Cys-1235 acts as the Nucleophile in catalysis. Active-site residues include His-1366 and Glu-1368.

In the N-terminal section; belongs to the FGAMS family.

The protein localises to the plastid. It localises to the chloroplast. It is found in the mitochondrion. The enzyme catalyses N(2)-formyl-N(1)-(5-phospho-beta-D-ribosyl)glycinamide + L-glutamine + ATP + H2O = 2-formamido-N(1)-(5-O-phospho-beta-D-ribosyl)acetamidine + L-glutamate + ADP + phosphate + H(+). The protein operates within purine metabolism; IMP biosynthesis via de novo pathway; 5-amino-1-(5-phospho-D-ribosyl)imidazole from N(2)-formyl-N(1)-(5-phospho-D-ribosyl)glycinamide: step 1/2. Its function is as follows. Essential to the male gametophyte development. Phosphoribosylformylglycinamidine synthase involved in the purines biosynthetic pathway. Catalyzes the ATP-dependent conversion of formylglycinamide ribonucleotide (FGAR) and glutamine to yield formylglycinamidine ribonucleotide (FGAM) and glutamate. The sequence is that of Probable phosphoribosylformylglycinamidine synthase, chloroplastic/mitochondrial from Arabidopsis thaliana (Mouse-ear cress).